The following is a 776-amino-acid chain: Probable inorganic carbon transporter subunit DabA (776 aa).

Residues C313, D315, H473, and C488 each coordinate Zn(2+).

This sequence belongs to the inorganic carbon transporter (TC 9.A.2) DabA family. In terms of assembly, forms a complex with DabB. Zn(2+) serves as cofactor.

Its subcellular location is the cell inner membrane. Its function is as follows. Part of an energy-coupled inorganic carbon pump. The polypeptide is Probable inorganic carbon transporter subunit DabA (Chromobacterium violaceum (strain ATCC 12472 / DSM 30191 / JCM 1249 / CCUG 213 / NBRC 12614 / NCIMB 9131 / NCTC 9757 / MK)).